The sequence spans 101 residues: NAD(P)H-quinone oxidoreductase subunit 4L, chloroplastic (101 aa).

Transmembrane regions (helical) follow at residues 2–22 (MLEH…YGLI), 32–52 (MCLE…SDFF), and 61–81 (IFSI…PAIV).

It belongs to the complex I subunit 4L family. As to quaternary structure, NDH is composed of at least 16 different subunits, 5 of which are encoded in the nucleus.

The protein resides in the plastid. The protein localises to the chloroplast thylakoid membrane. It catalyses the reaction a plastoquinone + NADH + (n+1) H(+)(in) = a plastoquinol + NAD(+) + n H(+)(out). The enzyme catalyses a plastoquinone + NADPH + (n+1) H(+)(in) = a plastoquinol + NADP(+) + n H(+)(out). In terms of biological role, NDH shuttles electrons from NAD(P)H:plastoquinone, via FMN and iron-sulfur (Fe-S) centers, to quinones in the photosynthetic chain and possibly in a chloroplast respiratory chain. The immediate electron acceptor for the enzyme in this species is believed to be plastoquinone. Couples the redox reaction to proton translocation, and thus conserves the redox energy in a proton gradient. The polypeptide is NAD(P)H-quinone oxidoreductase subunit 4L, chloroplastic (Morus indica (Mulberry)).